A 122-amino-acid chain; its full sequence is Large ribosomal subunit protein bL12 (122 aa).

Belongs to the bacterial ribosomal protein bL12 family. In terms of assembly, homodimer. Part of the ribosomal stalk of the 50S ribosomal subunit. Forms a multimeric L10(L12)X complex, where L10 forms an elongated spine to which 2 to 4 L12 dimers bind in a sequential fashion. Binds GTP-bound translation factors.

Functionally, forms part of the ribosomal stalk which helps the ribosome interact with GTP-bound translation factors. Is thus essential for accurate translation. This chain is Large ribosomal subunit protein bL12, found in Mycoplasma genitalium (strain ATCC 33530 / DSM 19775 / NCTC 10195 / G37) (Mycoplasmoides genitalium).